A 1553-amino-acid chain; its full sequence is DNA topoisomerase 2-alpha (1553 aa).

Residues 1–25 are disordered; that stretch reads MELLDSPAPLRPLHDNPRLPKADGA. The span at 12–25 shows a compositional bias: basic and acidic residues; it reads PLHDNPRLPKADGA. ATP is bound by residues N92, N121, 149–151, and 162–169; these read SSN and GRNGYGAK. Residues 343–345 are interaction with DNA; the sequence is KKK. Position 377-379 (377-379) interacts with ATP; that stretch reads QTK. The Toprim domain occupies 456-573; it reads CTLILTEGDS…SLLRHNFLEE (118 aa). Positions 462, 542, and 544 each coordinate Mg(2+). The region spanning 716–1163 is the Topo IIA-type catalytic domain; the sequence is IPSLVDGLKP…SPSDLWKEDL (448 aa). Y806 serves as the catalytic O-(5'-phospho-DNA)-tyrosine intermediate. Positions 991 to 1000 are interaction with DNA; sequence KLQTNLTCNS. Disordered stretches follow at residues 1095 to 1114 and 1186 to 1553; these read QNKE…AATG and TGKP…DDMF. Residues 1098 to 1107 show a composition bias toward acidic residues; that stretch reads EEEEGDESGE. Positions 1242-1262 are enriched in basic and acidic residues; it reads SEKNESDEKQEGNSSGDKEPS. Composition is skewed to acidic residues over residues 1300 to 1310 and 1334 to 1349; these read SESDSESDDFE and SDAD…EYQE. Positions 1371–1385 are enriched in basic and acidic residues; sequence VPKEKKGKAPKEKPL. Residues 1413–1432 show a composition bias toward low complexity; sequence PRAQAVPKKPAAAKKGSTAK. Residues 1444–1454 show a composition bias toward basic residues; sequence KKKAAPKAPRR. Positions 1517 to 1532 are enriched in low complexity; it reads SIDLTADSPAAAAPRT.

It belongs to the type II topoisomerase family. Homodimer. Requires Mg(2+) as cofactor. Mn(2+) is required as a cofactor. The cofactor is Ca(2+).

Its subcellular location is the cytoplasm. It localises to the nucleus. The protein localises to the nucleoplasm. It is found in the nucleolus. It carries out the reaction ATP-dependent breakage, passage and rejoining of double-stranded DNA.. Key decatenating enzyme that alters DNA topology by binding to two double-stranded DNA molecules, generating a double-stranded break in one of the strands, passing the intact strand through the broken strand, and religating the broken strand. May play a role in the regulation of circadian rhythm. The protein is DNA topoisomerase 2-alpha (TOP2A) of Gallus gallus (Chicken).